The sequence spans 320 residues: Malate dehydrogenase (320 aa).

NAD(+) contacts are provided by residues 10–15 (GAGQIG) and D34. Residues R83 and R89 each coordinate substrate. NAD(+) is bound by residues N96 and 119 to 121 (ITN). Positions 121 and 152 each coordinate substrate. Catalysis depends on H176, which acts as the Proton acceptor.

This sequence belongs to the LDH/MDH superfamily. MDH type 3 family.

It catalyses the reaction (S)-malate + NAD(+) = oxaloacetate + NADH + H(+). Its function is as follows. Catalyzes the reversible oxidation of malate to oxaloacetate. The chain is Malate dehydrogenase from Dinoroseobacter shibae (strain DSM 16493 / NCIMB 14021 / DFL 12).